We begin with the raw amino-acid sequence, 219 residues long: Histone H1.01 (219 aa).

2 stretches are compositionally biased toward low complexity: residues 1-19 (MSET…GAKA) and 27-39 (AAGG…PAGP). Disordered stretches follow at residues 1–40 (MSET…AGPS) and 94–219 (LVQT…AKKK). The residue at position 2 (Ser2) is an N-acetylserine. The H15 domain occupies 37 to 110 (AGPSVTELIT…GASGSFRLNK (74 aa)). Basic residues-rich tracts occupy residues 119-134 (APRK…KPAA), 142-159 (KKPK…KAKK), 167-185 (KAAK…KKAA), and 192-219 (KAVK…AKKK).

The protein belongs to the histone H1/H5 family.

The protein resides in the nucleus. Its subcellular location is the chromosome. Its function is as follows. Histones H1 are necessary for the condensation of nucleosome chains into higher-order structures. The protein is Histone H1.01 of Gallus gallus (Chicken).